A 213-amino-acid chain; its full sequence is Redox-sensing transcriptional repressor Rex (213 aa).

Residues 17–56 constitute a DNA-binding region (H-T-H motif); it reads LYYRIFKRFYADQVEKASSKQIADAMGIDSATVRRDFSYF. 91–96 provides a ligand contact to NAD(+); sequence GCGNIG.

This sequence belongs to the transcriptional regulatory Rex family. In terms of assembly, homodimer.

It localises to the cytoplasm. Functionally, modulates transcription in response to changes in cellular NADH/NAD(+) redox state. This is Redox-sensing transcriptional repressor Rex from Streptococcus uberis (strain ATCC BAA-854 / 0140J).